The chain runs to 294 residues: Phosphatidylserine decarboxylase proenzyme (294 aa).

Active-site charge relay system; for autoendoproteolytic cleavage activity residues include Asp100, His157, and Ser261. Ser261 (schiff-base intermediate with substrate; via pyruvic acid; for decarboxylase activity) is an active-site residue. Pyruvic acid (Ser); by autocatalysis is present on Ser261.

This sequence belongs to the phosphatidylserine decarboxylase family. PSD-B subfamily. Prokaryotic type I sub-subfamily. In terms of assembly, heterodimer of a large membrane-associated beta subunit and a small pyruvoyl-containing alpha subunit. Pyruvate is required as a cofactor. Post-translationally, is synthesized initially as an inactive proenzyme. Formation of the active enzyme involves a self-maturation process in which the active site pyruvoyl group is generated from an internal serine residue via an autocatalytic post-translational modification. Two non-identical subunits are generated from the proenzyme in this reaction, and the pyruvate is formed at the N-terminus of the alpha chain, which is derived from the carboxyl end of the proenzyme. The autoendoproteolytic cleavage occurs by a canonical serine protease mechanism, in which the side chain hydroxyl group of the serine supplies its oxygen atom to form the C-terminus of the beta chain, while the remainder of the serine residue undergoes an oxidative deamination to produce ammonia and the pyruvoyl prosthetic group on the alpha chain. During this reaction, the Ser that is part of the protease active site of the proenzyme becomes the pyruvoyl prosthetic group, which constitutes an essential element of the active site of the mature decarboxylase.

It is found in the cell membrane. It carries out the reaction a 1,2-diacyl-sn-glycero-3-phospho-L-serine + H(+) = a 1,2-diacyl-sn-glycero-3-phosphoethanolamine + CO2. It participates in phospholipid metabolism; phosphatidylethanolamine biosynthesis; phosphatidylethanolamine from CDP-diacylglycerol: step 2/2. Its function is as follows. Catalyzes the formation of phosphatidylethanolamine (PtdEtn) from phosphatidylserine (PtdSer). The protein is Phosphatidylserine decarboxylase proenzyme of Mannheimia succiniciproducens (strain KCTC 0769BP / MBEL55E).